Consider the following 346-residue polypeptide: FMRFamide-related peptides type HF-1 (346 aa).

A signal peptide spans 1-19; sequence MTSLCLTIAPAVLSLICLS. Residues 20–45 constitute a propeptide that is removed on maturation; sequence SYGWAEDNNGIHTLDDGDNDPFFRHN. Phe51 carries the phenylalanine amide modification. Residues 54–94 constitute a propeptide that is removed on maturation; that stretch reads AFVPLWDNADDSLVRKNLLTHWSEFPLSPALSSSDVFSRNS. Phenylalanine amide is present on Phe100. A propeptide spanning residues 103 to 109 is cleaved from the precursor; sequence SYPPYQD. A Phenylalanine amide modification is found at Phe115. Residues 118-203 constitute a propeptide that is removed on maturation; the sequence is SHQPDIDEYL…EILSNEDDLE (86 aa). A disordered region spans residues 137–185; that stretch reads YRKRRSEDGDSKEDGLNRVARSADANQQSKNTQSNKFGKDLQKRETKKE. Residues 141–152 are compositionally biased toward basic and acidic residues; the sequence is RSEDGDSKEDGL. Positions 160-172 are enriched in polar residues; that stretch reads DANQQSKNTQSNK. Basic and acidic residues predominate over residues 173 to 185; the sequence is FGKDLQKRETKKE. Phe209 and Phe216 each carry phenylalanine amide. Positions 219 to 226 are excised as a propeptide; sequence GDEDESYD. Position 232 is a phenylalanine amide (Phe232). Positions 235-243 are excised as a propeptide; that stretch reads SLRHDQEFE. Phenylalanine amide occurs at positions 249 and 256. The propeptide occupies 259-267; that stretch reads GDEDDAREE. A Phenylalanine amide modification is found at Phe273. The propeptide occupies 276 to 283; it reads SSNEDEDI. Phe290 carries the phenylalanine amide modification. A propeptide spanning residues 293–301 is cleaved from the precursor; sequence SGNEDGDVD. 2 positions are modified to phenylalanine amide: Phe307 and Phe314. Positions 317–325 are excised as a propeptide; the sequence is SEKEDGDVD. Phe331 and Phe338 each carry phenylalanine amide. The propeptide occupies 341–346; the sequence is GDSETS.

Belongs to the FARP (FMRFamide related peptide) family. In terms of tissue distribution, central nervous system.

The protein localises to the secreted. Functionally, can function as both cardioregulatory hormones and transmitters and may regulate cardiovascular function. In Cornu aspersum (Brown garden snail), this protein is FMRFamide-related peptides type HF-1.